A 341-amino-acid polypeptide reads, in one-letter code: Ribonucleoside-diphosphate reductase subunit beta (341 aa).

Aspartate 89, glutamate 120, and histidine 123 together coordinate Fe cation. The active site involves tyrosine 127. Residues glutamate 185, glutamate 219, and histidine 222 each coordinate Fe cation.

Belongs to the ribonucleoside diphosphate reductase small chain family. In terms of assembly, tetramer of two alpha and two beta subunits. It depends on Fe cation as a cofactor.

The enzyme catalyses a 2'-deoxyribonucleoside 5'-diphosphate + [thioredoxin]-disulfide + H2O = a ribonucleoside 5'-diphosphate + [thioredoxin]-dithiol. In terms of biological role, provides the precursors necessary for DNA synthesis. Catalyzes the biosynthesis of deoxyribonucleotides from the corresponding ribonucleotides. The protein is Ribonucleoside-diphosphate reductase subunit beta (nrdB) of Helicobacter pylori (strain J99 / ATCC 700824) (Campylobacter pylori J99).